The chain runs to 569 residues: DNA-binding protein eta2 (569 aa).

Disordered regions lie at residues 1-26 and 133-159; these read MMLA…TLSC and KRKI…AKKR. A compositionally biased stretch (polar residues) spans 9–26; that stretch reads INENQGTRSNLESPTLSC. At serine 21 the chain carries Phosphoserine. 2 Myb-like domains span residues 322 to 371 and 377 to 459; these read LDPK…RFVV and ETID…EKTI. The segment at 459–487 is disordered; that stretch reads IASYSSNQRQEEDQGKKRKKRKKKKSKGK. Basic residues predominate over residues 474–487; it reads KKRKKRKKKKSKGK.

It is found in the nucleus. This chain is DNA-binding protein eta2 (eta2), found in Schizosaccharomyces pombe (strain 972 / ATCC 24843) (Fission yeast).